Here is a 452-residue protein sequence, read N- to C-terminus: Pup--protein ligase (452 aa).

Position 9 (Glu9) interacts with Mg(2+). Arg53 lines the ATP pocket. Residue Tyr55 coordinates Mg(2+). Asp57 (proton acceptor) is an active-site residue. Glu63 contributes to the Mg(2+) binding site. 2 residues coordinate ATP: Thr66 and Trp419.

It belongs to the Pup ligase/Pup deamidase family. Pup-conjugating enzyme subfamily.

The enzyme catalyses ATP + [prokaryotic ubiquitin-like protein]-L-glutamate + [protein]-L-lysine = ADP + phosphate + N(6)-([prokaryotic ubiquitin-like protein]-gamma-L-glutamyl)-[protein]-L-lysine.. The protein operates within protein degradation; proteasomal Pup-dependent pathway. Its pathway is protein modification; protein pupylation. Its function is as follows. Catalyzes the covalent attachment of the prokaryotic ubiquitin-like protein modifier Pup to the proteasomal substrate proteins, thereby targeting them for proteasomal degradation. This tagging system is termed pupylation. The ligation reaction involves the side-chain carboxylate of the C-terminal glutamate of Pup and the side-chain amino group of a substrate lysine. In Salinispora tropica (strain ATCC BAA-916 / DSM 44818 / JCM 13857 / NBRC 105044 / CNB-440), this protein is Pup--protein ligase.